We begin with the raw amino-acid sequence, 132 residues long: Small ribosomal subunit protein uS8 (132 aa).

It belongs to the universal ribosomal protein uS8 family. As to quaternary structure, part of the 30S ribosomal subunit. Contacts proteins S5 and S12.

One of the primary rRNA binding proteins, it binds directly to 16S rRNA central domain where it helps coordinate assembly of the platform of the 30S subunit. This Listeria innocua serovar 6a (strain ATCC BAA-680 / CLIP 11262) protein is Small ribosomal subunit protein uS8.